The following is a 34-amino-acid chain: Photosystem II reaction center protein M (34 aa).

A helical membrane pass occupies residues 7–27 (GFVASLMFILVPAIFLIVLYI).

The protein belongs to the PsbM family. In terms of assembly, PSII is composed of 1 copy each of membrane proteins PsbA, PsbB, PsbC, PsbD, PsbE, PsbF, PsbH, PsbI, PsbJ, PsbK, PsbL, PsbM, PsbT, PsbX, PsbY, PsbZ, Psb30/Ycf12, peripheral proteins PsbO, CyanoQ (PsbQ), PsbU, PsbV and a large number of cofactors. It forms dimeric complexes.

The protein resides in the cellular thylakoid membrane. In terms of biological role, one of the components of the core complex of photosystem II (PSII). PSII is a light-driven water:plastoquinone oxidoreductase that uses light energy to abstract electrons from H(2)O, generating O(2) and a proton gradient subsequently used for ATP formation. It consists of a core antenna complex that captures photons, and an electron transfer chain that converts photonic excitation into a charge separation. This subunit is found at the monomer-monomer interface. This Synechococcus sp. (strain CC9605) protein is Photosystem II reaction center protein M.